The following is a 331-amino-acid chain: 6-phosphogluconolactonase (331 aa).

Residue K287 is modified to N6-acetyllysine.

It belongs to the cycloisomerase 2 family.

The catalysed reaction is 6-phospho-D-glucono-1,5-lactone + H2O = 6-phospho-D-gluconate + H(+). It participates in carbohydrate degradation; pentose phosphate pathway; D-ribulose 5-phosphate from D-glucose 6-phosphate (oxidative stage): step 2/3. Its function is as follows. Catalyzes the hydrolysis of 6-phosphogluconolactone to 6-phosphogluconate. The chain is 6-phosphogluconolactonase from Escherichia coli O139:H28 (strain E24377A / ETEC).